A 157-amino-acid polypeptide reads, in one-letter code: Transmembrane protein 42 (157 aa).

4 consecutive transmembrane segments (helical) span residues phenylalanine 37 to alanine 57, isoleucine 67 to phenylalanine 87, isoleucine 100 to leucine 120, and cysteine 124 to histidine 144.

It is found in the membrane. This is Transmembrane protein 42 (Tmem42) from Mus musculus (Mouse).